Here is a 2633-residue protein sequence, read N- to C-terminus: Non-reducing polyketide synthase sor2 (2633 aa).

Residues 67–237 (VSNAQKLAEW…TTSTRTVAAL (171 aa)) form an N-terminal acylcarrier protein transacylase domain (SAT) region. The active-site Nucleophile; for transacylase activity is the Cys140. His258 (proton donor/acceptor; for transacylase activity) is an active-site residue. The Ketosynthase family 3 (KS3) domain maps to 389-814 (ENDIAVIGMA…GSNASVIIKQ (426 aa)). Active-site for beta-ketoacyl synthase activity residues include Cys561, His696, and His737. Positions 928-1239 (CFGGQVSTFV…SKASSQLSDV (312 aa)) are malonyl-CoA:ACP transacylase (MAT) domain. The segment at 1307–1437 (PQPVGLYTLL…GQLHFQASDD (131 aa)) is N-terminal hotdog fold. Positions 1307 to 1627 (PQPVGLYTLL…YAPVSLDQLF (321 aa)) constitute a PKS/mFAS DH domain. A product template (PT) domain region spans residues 1338-1509 (MSDHAIGKAQ…SNESAGRLVR (172 aa)). Positions 1464–1627 (GRSDEVIQGQ…YAPVSLDQLF (164 aa)) are C-terminal hotdog fold. Residues 1684 to 1758 (EELWLRLRPV…GILKFLQSTL (75 aa)) form the Carrier domain. Ser1718 carries the post-translational modification O-(pantetheine 4'-phosphoryl)serine. The tract at residues 1762–1792 (DVHDSSETMSTVSSDGNVHSPPTSGSEMASP) is disordered. Polar residues predominate over residues 1768–1790 (ETMSTVSSDGNVHSPPTSGSEMA). The segment at 1982-2166 (FELMADFLTR…ASGFKHVRWT (185 aa)) is methyltransferase domain. An NADPH-binding (R) domain region spans residues 2253-2495 (VTGATGSLGS…TLRALPDVDG (243 aa)).

Requires pantetheine 4'-phosphate as cofactor.

It functions in the pathway secondary metabolite biosynthesis. Non-reducing polyketide synthase; part of the SOR gene cluster that mediates the biosynthesis of sorbicillinoids, a diverse group of yellow secondary metabolites that restrict growth of competing pathogenic fungi but not of bacteria. Sorbicillinoids biosynthesis requires the action of two PKSs. The SOR cluster is required for the production of trichodimerol and dihydrotrichotetronin, with sor2 being sufficient for production of trichodimerol, but not dihydrotrichotetronin in the light. Sor1 iteratively combines three acetyl units and the growing chain is modified by the ketoacyl reductase subunit, and optional by the enoyl reductase subunit in the second cycle. The polyketide is then handed over to the PKS sor2, which adds three more acetyl units, and two methyl groups. Sor2 releases an aldehyde, which undergoes spontaneous cyclization resulting in the formation of sorbicillin or 2',3'-dihydrosorbicillin. The monooxygenase sor5 oxidizes sorbicillin and 2',3'-dihydrosorbicillin to 2',3'-dihydrosorbicillinol and sorbicillinol, respectively. The oxidoreductase sor8 further converts sorbicillinol into oxosorbicillinol. Sorbicillinol is the building block for the other sorbicillinoids such as disorbicillinol, bisvertinolon, dihydrobisvertinolone, and dihydrotrichotetronine. This is Non-reducing polyketide synthase sor2 from Hypocrea jecorina (strain QM6a) (Trichoderma reesei).